Reading from the N-terminus, the 211-residue chain is Uridine kinase (211 aa).

Residue glycine 12–threonine 19 coordinates ATP.

The protein belongs to the uridine kinase family.

It is found in the cytoplasm. The catalysed reaction is uridine + ATP = UMP + ADP + H(+). It carries out the reaction cytidine + ATP = CMP + ADP + H(+). The protein operates within pyrimidine metabolism; CTP biosynthesis via salvage pathway; CTP from cytidine: step 1/3. It participates in pyrimidine metabolism; UMP biosynthesis via salvage pathway; UMP from uridine: step 1/1. In Bacillus velezensis (strain DSM 23117 / BGSC 10A6 / LMG 26770 / FZB42) (Bacillus amyloliquefaciens subsp. plantarum), this protein is Uridine kinase.